The primary structure comprises 134 residues: Protein dpy-30 homolog (134 aa).

Residues Met-1 to Tyr-81 form a disordered region. Residues Ala-31–Lys-68 show a composition bias toward low complexity. Residues Ser-71–Tyr-81 are compositionally biased toward polar residues.

Belongs to the dpy-30 family. Core component of several methyltransferase-containing complexes. Component of the SET1 complex, composed at least of the catalytic subunit Set1, wds/WDR5, Wdr82, Rbbp5, ash2, Cfp1/CXXC1, hcf and Dpy-30L1. Component of the MLL3/4 complex composed at least of the catalytic subunit trr, ash2, Rbbp5, Dpy-30L1, wds, hcf, ptip, Pa1, Utx, Lpt and Ncoa6. In terms of tissue distribution, expressed in larval brain, gonad, imaginal disk and salivary gland and in adult brain, testis, ovary and salivary gland.

It is found in the nucleus. Component of the SET1 complex that specifically di- and trimethylates 'Lys-4' of histone H3 and of the MLL3/4 complex which also methylates histone H3 'Lys-4'. Inhibits MTF-1 transcription factor activity. In Drosophila melanogaster (Fruit fly), this protein is Protein dpy-30 homolog.